The following is a 143-amino-acid chain: Large ribosomal subunit protein uL13 (143 aa).

It belongs to the universal ribosomal protein uL13 family. Part of the 50S ribosomal subunit.

In terms of biological role, this protein is one of the early assembly proteins of the 50S ribosomal subunit, although it is not seen to bind rRNA by itself. It is important during the early stages of 50S assembly. The protein is Large ribosomal subunit protein uL13 of Geobacter sulfurreducens (strain ATCC 51573 / DSM 12127 / PCA).